We begin with the raw amino-acid sequence, 228 residues long: Death domain-containing membrane protein NRADD (228 aa).

The Extracellular segment spans residues 1-52 (MLYNVSKGVVYSDTALQGQDGDREGMWVGAGGALAPNTSSLFPPEPPGASSN). 2 N-linked (GlcNAc...) asparagine glycosylation sites follow: Asn-4 and Asn-37. Residues 53-73 (IIPVYCALLATVILGLLAYVA) traverse the membrane as a helical; Signal-anchor for type III membrane protein segment. Topologically, residues 74 to 228 (FKCWRSHKQR…SSPAESSSVV (155 aa)) are cytoplasmic. A disordered region spans residues 87–122 (AKARTVELGDPDRDQRRGDSNVFVDSPPSLEPCIPS). Residues 90–105 (RTVELGDPDRDQRRGD) are compositionally biased toward basic and acidic residues. The region spanning 143-222 (EEVQRLLMMG…DVVQVLSSPA (80 aa)) is the Death domain.

Interacts with NGFR. Interacts with NTRK1. Interacts with SORT1. In terms of tissue distribution, detected in lung and testis.

It localises to the cell membrane. The protein localises to the nucleus. Functionally, modulates NTRK1 signaling. Can activate several intracellular signaling pathways, leading to activation of JUN. Promotes apoptosis. Promotes translocation of SORT1 to the cell membrane, and thereby hinders lysosomal degradation of SOTR1 and promotes its interaction with NGFR. This chain is Death domain-containing membrane protein NRADD (Nradd), found in Mus musculus (Mouse).